The sequence spans 201 residues: Molybdenum cofactor guanylyltransferase (201 aa).

Residues 15–17 (LAG), lysine 28, aspartate 74, and aspartate 104 contribute to the GTP site. Aspartate 104 serves as a coordination point for Mg(2+).

This sequence belongs to the MobA family. In terms of assembly, monomer. The cofactor is Mg(2+).

The protein localises to the cytoplasm. The catalysed reaction is Mo-molybdopterin + GTP + H(+) = Mo-molybdopterin guanine dinucleotide + diphosphate. Functionally, transfers a GMP moiety from GTP to Mo-molybdopterin (Mo-MPT) cofactor (Moco or molybdenum cofactor) to form Mo-molybdopterin guanine dinucleotide (Mo-MGD) cofactor. The chain is Molybdenum cofactor guanylyltransferase from Pseudomonas syringae pv. tomato (strain ATCC BAA-871 / DC3000).